The sequence spans 105 residues: Large ribosomal subunit protein uL24 (105 aa).

Belongs to the universal ribosomal protein uL24 family. As to quaternary structure, part of the 50S ribosomal subunit.

Its function is as follows. One of two assembly initiator proteins, it binds directly to the 5'-end of the 23S rRNA, where it nucleates assembly of the 50S subunit. Functionally, one of the proteins that surrounds the polypeptide exit tunnel on the outside of the subunit. This Vibrio vulnificus (strain YJ016) protein is Large ribosomal subunit protein uL24.